Consider the following 366-residue polypeptide: Chitoporin (366 aa).

Residues 1 to 23 (MDKMFKRTVIGAAVALASTGLMA) form the signal peptide.

Belongs to the Gram-negative porin family.

The protein resides in the cell outer membrane. In terms of biological role, involved in the uptake of chitosugars. The sequence is that of Chitoporin (chiP) from Vibrio furnissii.